Consider the following 903-residue polypeptide: Protein translocase subunit SecA (903 aa).

ATP-binding positions include Gln87, 105–109 (GEGKT), and Asp494. Residues 861-883 (SGSQGAAPRQPVRAEGKKVGRND) are disordered. Residues 872-881 (VRAEGKKVGR) are compositionally biased toward basic and acidic residues. Zn(2+)-binding residues include Cys885, Cys887, Cys896, and Cys897.

Belongs to the SecA family. As to quaternary structure, monomer and homodimer. Part of the essential Sec protein translocation apparatus which comprises SecA, SecYEG and auxiliary proteins SecDF. Other proteins may also be involved. Zn(2+) is required as a cofactor.

It is found in the cell membrane. It localises to the cytoplasm. It carries out the reaction ATP + H2O + cellular proteinSide 1 = ADP + phosphate + cellular proteinSide 2.. Its function is as follows. Part of the Sec protein translocase complex. Interacts with the SecYEG preprotein conducting channel. Has a central role in coupling the hydrolysis of ATP to the transfer of proteins into and across the cell membrane, serving as an ATP-driven molecular motor driving the stepwise translocation of polypeptide chains across the membrane. In Symbiobacterium thermophilum (strain DSM 24528 / JCM 14929 / IAM 14863 / T), this protein is Protein translocase subunit SecA.